A 551-amino-acid chain; its full sequence is MGDIAKIHITPETPARPTILNPFESPNDYHRLHESVVPSPSVFKSCKSSSATPAKFKWSIDEMANLLPVEIDPEDIHRQAVFFSQARADSEIEEKRQHAIEQFFTKGAIVPSPWGPLTSKQSMKLPHHKSPLSPLVTEEIQPPKKINAICQTVLSLPVDFNLEKVLGDYYKTEELTEQVQESLSSSSLRRKLFLDGHDSGSESSTPSSPDRNSPSVHPSSRELMSSAIVSPLQCGIPTGTPMSGQFSSSPIQGQCRAYSLGSVTSPMFSERSSPAFKSPILSPIRLQQSVTPESGERKRLSFLSPNCVPKGSSDINMNRSGESPLVEGCSPIRSCSPFQSRPRNRACMWASPAHISPILHPVLHDKENIHITQHLPTMDLDATSTDPHAQQDSLHAESSESEASVAVSEQMEQDELFVKDTGENVETNGKECESDNEDEGENELGEEESCAWVPEEDTASPVRLSSTGTGSVPNAESTHMFLSLLAEGSITPYDTSMQVDSGYNTHSVCTTSLMDTLSSDSQSKEMLDTHTSEESGPFTRHTKPKLFVPPH.

3 disordered regions span residues 194–221 (LDGH…PSSR), 379–474 (DLDA…SVPN), and 517–551 (LSSD…VPPH). Positions 201–215 (SESSTPSSPDRNSPS) are enriched in low complexity. The span at 382–393 (ATSTDPHAQQDS) shows a compositional bias: polar residues. Residues 416 to 433 (LFVKDTGENVETNGKECE) show a composition bias toward basic and acidic residues. Residues 434–458 (SDNEDEGENELGEEESCAWVPEEDT) show a composition bias toward acidic residues. A compositionally biased stretch (polar residues) spans 463–474 (RLSSTGTGSVPN). A compositionally biased stretch (basic and acidic residues) spans 522 to 533 (QSKEMLDTHTSE).

It belongs to the BORA family.

Its function is as follows. Required for the activation of aurka at the onset of mitosis. The chain is Protein aurora borealis (bora) from Danio rerio (Zebrafish).